A 414-amino-acid chain; its full sequence is tRNA(Ile)-lysidine synthase (414 aa).

13-18 contacts ATP; the sequence is SGGIDS.

It belongs to the tRNA(Ile)-lysidine synthase family.

The protein localises to the cytoplasm. The catalysed reaction is cytidine(34) in tRNA(Ile2) + L-lysine + ATP = lysidine(34) in tRNA(Ile2) + AMP + diphosphate + H(+). In terms of biological role, ligates lysine onto the cytidine present at position 34 of the AUA codon-specific tRNA(Ile) that contains the anticodon CAU, in an ATP-dependent manner. Cytidine is converted to lysidine, thus changing the amino acid specificity of the tRNA from methionine to isoleucine. The polypeptide is tRNA(Ile)-lysidine synthase (Thermotoga maritima (strain ATCC 43589 / DSM 3109 / JCM 10099 / NBRC 100826 / MSB8)).